An 87-amino-acid polypeptide reads, in one-letter code: Small ribosomal subunit protein uS15c (87 aa).

Belongs to the universal ribosomal protein uS15 family. As to quaternary structure, part of the 30S ribosomal subunit.

It is found in the plastid. The protein localises to the chloroplast. The protein is Small ribosomal subunit protein uS15c (rps15) of Nymphaea alba (White water-lily).